Reading from the N-terminus, the 417-residue chain is UPF0761 membrane protein CV_0810 (417 aa).

7 consecutive transmembrane segments (helical) span residues 52–72, 79–99, 110–130, 150–170, 185–205, 214–234, and 258–278; these read LLAL…FPVF, FKIM…ITVY, LTAA…STIE, MVYW…LLSW, LLAS…VLAL, FVPF…LELT, and IPIF…GAVF.

It belongs to the UPF0761 family.

It is found in the cell inner membrane. The sequence is that of UPF0761 membrane protein CV_0810 from Chromobacterium violaceum (strain ATCC 12472 / DSM 30191 / JCM 1249 / CCUG 213 / NBRC 12614 / NCIMB 9131 / NCTC 9757 / MK).